A 547-amino-acid polypeptide reads, in one-letter code: Glucose-6-phosphate isomerase 2 (547 aa).

Glutamate 351 acts as the Proton donor in catalysis. Catalysis depends on residues histidine 382 and lysine 508.

This sequence belongs to the GPI family.

The protein resides in the cytoplasm. It carries out the reaction alpha-D-glucose 6-phosphate = beta-D-fructose 6-phosphate. It participates in carbohydrate biosynthesis; gluconeogenesis. It functions in the pathway carbohydrate degradation; glycolysis; D-glyceraldehyde 3-phosphate and glycerone phosphate from D-glucose: step 2/4. Its function is as follows. Catalyzes the reversible isomerization of glucose-6-phosphate to fructose-6-phosphate. The protein is Glucose-6-phosphate isomerase 2 of Neisseria meningitidis serogroup B (strain ATCC BAA-335 / MC58).